Reading from the N-terminus, the 281-residue chain is Glyceraldehyde dehydrogenase medium chain (281 aa).

In terms of domain architecture, FAD-binding PCMH-type spans 1-176; it reads MYPPEFSYVR…TQIEVPVLDG (176 aa). FAD-binding positions include 31-35 and 110-114; these read AGGQS and TIGGA.

Heterotrimer composed of a large chain (CutA), a medium chain (CutB) and a small chain (CutC). FAD is required as a cofactor.

The protein resides in the cytoplasm. It carries out the reaction D-glyceraldehyde + A + H2O = (R)-glycerate + AH2 + H(+). Component of the glyceraldehyde dehydrogenase which is involved the nonphosphorylated Entner-Doudoroff pathway. Catalyzes the oxidation of D-glyceraldehyde to yield glycerate. When the artificial electron acceptor 2,6-dichlorophenol-indophenol (Cl2Ind) is used, the enzyme shows a broad substrate range (glyceraldehyde-3-phosphate, formaldehyde, acetaldehyde, propionaldehyde and isobutyraldehyde), but is most active with D-glyceraldehyde. It is not known which acceptor is utilized in vivo. The chain is Glyceraldehyde dehydrogenase medium chain (cutB) from Sulfolobus acidocaldarius (strain ATCC 33909 / DSM 639 / JCM 8929 / NBRC 15157 / NCIMB 11770).